A 78-amino-acid chain; its full sequence is UPF0349 protein BPUM_2879 (78 aa).

The protein belongs to the UPF0349 family.

This is UPF0349 protein BPUM_2879 from Bacillus pumilus (strain SAFR-032).